Reading from the N-terminus, the 143-residue chain is Small ribosomal subunit protein uS12 (143 aa).

The residue at position 62 (proline 62) is a Hydroxyproline.

Belongs to the universal ribosomal protein uS12 family.

The protein is Small ribosomal subunit protein uS12 (rps23) of Dictyostelium discoideum (Social amoeba).